Reading from the N-terminus, the 77-residue chain is Putative regulatory protein tsl2331 (77 aa).

Belongs to the RemA family.

This Thermosynechococcus vestitus (strain NIES-2133 / IAM M-273 / BP-1) protein is Putative regulatory protein tsl2331.